A 334-amino-acid polypeptide reads, in one-letter code: Probable quinone oxidoreductase (334 aa).

This sequence belongs to the zinc-containing alcohol dehydrogenase family. Quinone oxidoreductase subfamily.

The catalysed reaction is 2 a quinone + NADPH + H(+) = 2 a 1,4-benzosemiquinone + NADP(+). The chain is Probable quinone oxidoreductase (ZTA1) from Saccharomyces cerevisiae (strain ATCC 204508 / S288c) (Baker's yeast).